A 2463-amino-acid chain; its full sequence is Protein TIC 214 (2463 aa).

Helical transmembrane passes span 18–38 (VGLY…LFLL), 60–80 (FFTG…HLAL), 86–106 (ILLL…SGQW), 127–147 (LVFL…GRPM), 170–190 (FVGW…VFVW), and 297–317 (LFSI…PLLY). The stretch at 326-441 (QLQRKLSNET…AARAMQEAYK (116 aa)) forms a coiled coil. Disordered stretches follow at residues 792–841 (AVPK…RKVN), 1230–1249 (SIQK…GPKK), 1393–1417 (SGGR…EQDF), 2116–2136 (EEEK…KLKK), and 2162–2187 (KQRA…RKVQ). The span at 794 to 830 (PKKKKKISKSKQKNVKSKQKNVKSKQKNVKSKQKNVK) shows a compositional bias: basic residues. Basic and acidic residues-rich tracts occupy residues 832–841 (KQNEIKRKVN), 1231–1249 (IQKD…GPKK), and 1397–1417 (ETPE…EQDF). The stretch at 2049 to 2192 (WDALVASLKQ…KRKVQVQENK (144 aa)) forms a coiled coil. Residues 2124-2136 (KRKKERKKEKLKK) show a composition bias toward basic residues.

It belongs to the TIC214 family. In terms of assembly, part of the Tic complex.

Its subcellular location is the plastid. It is found in the chloroplast inner membrane. Involved in protein precursor import into chloroplasts. May be part of an intermediate translocation complex acting as a protein-conducting channel at the inner envelope. This chain is Protein TIC 214, found in Oenothera elata subsp. hookeri (Hooker's evening primrose).